Consider the following 212-residue polypeptide: Phosphatidylserine decarboxylase proenzyme (212 aa).

S182 functions as the Schiff-base intermediate with substrate; via pyruvic acid in the catalytic mechanism. Residue S182 is modified to Pyruvic acid (Ser); by autocatalysis.

Belongs to the phosphatidylserine decarboxylase family. PSD-A subfamily. As to quaternary structure, heterodimer of a large membrane-associated beta subunit and a small pyruvoyl-containing alpha subunit. Pyruvate serves as cofactor. In terms of processing, is synthesized initially as an inactive proenzyme. Formation of the active enzyme involves a self-maturation process in which the active site pyruvoyl group is generated from an internal serine residue via an autocatalytic post-translational modification. Two non-identical subunits are generated from the proenzyme in this reaction, and the pyruvate is formed at the N-terminus of the alpha chain, which is derived from the carboxyl end of the proenzyme. The post-translation cleavage follows an unusual pathway, termed non-hydrolytic serinolysis, in which the side chain hydroxyl group of the serine supplies its oxygen atom to form the C-terminus of the beta chain, while the remainder of the serine residue undergoes an oxidative deamination to produce ammonia and the pyruvoyl prosthetic group on the alpha chain.

It localises to the cell membrane. The enzyme catalyses a 1,2-diacyl-sn-glycero-3-phospho-L-serine + H(+) = a 1,2-diacyl-sn-glycero-3-phosphoethanolamine + CO2. Its pathway is phospholipid metabolism; phosphatidylethanolamine biosynthesis; phosphatidylethanolamine from CDP-diacylglycerol: step 2/2. Functionally, catalyzes the formation of phosphatidylethanolamine (PtdEtn) from phosphatidylserine (PtdSer). The protein is Phosphatidylserine decarboxylase proenzyme of Chlorobium phaeobacteroides (strain DSM 266 / SMG 266 / 2430).